A 346-amino-acid polypeptide reads, in one-letter code: S-adenosylmethionine:tRNA ribosyltransferase-isomerase (346 aa).

Belongs to the QueA family. As to quaternary structure, monomer.

The protein resides in the cytoplasm. It carries out the reaction 7-aminomethyl-7-carbaguanosine(34) in tRNA + S-adenosyl-L-methionine = epoxyqueuosine(34) in tRNA + adenine + L-methionine + 2 H(+). The protein operates within tRNA modification; tRNA-queuosine biosynthesis. Its function is as follows. Transfers and isomerizes the ribose moiety from AdoMet to the 7-aminomethyl group of 7-deazaguanine (preQ1-tRNA) to give epoxyqueuosine (oQ-tRNA). In Nitrosomonas eutropha (strain DSM 101675 / C91 / Nm57), this protein is S-adenosylmethionine:tRNA ribosyltransferase-isomerase.